We begin with the raw amino-acid sequence, 286 residues long: Elongation factor Ts (286 aa).

Residues 82–85 (TDFV) are involved in Mg(2+) ion dislocation from EF-Tu.

The protein belongs to the EF-Ts family.

Its subcellular location is the cytoplasm. Its function is as follows. Associates with the EF-Tu.GDP complex and induces the exchange of GDP to GTP. It remains bound to the aminoacyl-tRNA.EF-Tu.GTP complex up to the GTP hydrolysis stage on the ribosome. The polypeptide is Elongation factor Ts (Hahella chejuensis (strain KCTC 2396)).